A 475-amino-acid chain; its full sequence is 1,3-beta-glucanosyltransferase gel2 (475 aa).

An N-terminal signal peptide occupies residues 1 to 21 (MLPTYVRLFTAVCALATTASA). Cysteines 69 and 98 form a disulfide. (1,3-beta-D-glucosyl)n contacts are provided by Y87, N159, E160, and D201. The active-site Proton donor is E160. 2 disulfide bridges follow: C215–C350 and C234–C265. The N-linked (GlcNAc...) asparagine glycan is linked to N236. E262 acts as the Nucleophile in catalysis. Y294 contributes to the (1,3-beta-D-glucosyl)n binding site. N311, N339, and N357 each carry an N-linked (GlcNAc...) asparagine glycan. A disordered region spans residues 420 to 451 (GESNTPGAHSSGSTSGSSSSGGSSSSSSDKES). Residues 429 to 446 (SSGSTSGSSSSGGSSSSS) show a composition bias toward low complexity. A lipid anchor (GPI-like-anchor amidated serine) is attached at S451. Residues 452–475 (AAGTISVPFVGLLSAASFMAFFML) constitute a propeptide, removed in mature form.

The protein belongs to the glycosyl hydrolase 72 family. The GPI-like anchor contains a phosphoceramide lipid group.

It localises to the cell membrane. Its function is as follows. Splits internally a 1,3-beta-glucan molecule and transfers the newly generated reducing end (the donor) to the non-reducing end of another 1,3-beta-glucan molecule (the acceptor) forming a 1,3-beta linkage, resulting in the elongation of 1,3-beta-glucan chains in the cell wall. Involved in cell wall morphogenesis. The protein is 1,3-beta-glucanosyltransferase gel2 (gel2) of Aspergillus fumigatus (strain CBS 144.89 / FGSC A1163 / CEA10) (Neosartorya fumigata).